A 625-amino-acid chain; its full sequence is Threonine--tRNA ligase (625 aa).

The interval 1-149 (MRVLLIHAKR…RNYEAKTTAR (149 aa)) is editing domain. Catalytic stretches follow at residues 197-494 (NPVN…PYIP) and 198-494 (PVNK…PYIP). Zn(2+) contacts are provided by Cys291, His342, and His463.

The protein belongs to the class-II aminoacyl-tRNA synthetase family. As to quaternary structure, homodimer. Requires Zn(2+) as cofactor.

It localises to the cytoplasm. It catalyses the reaction tRNA(Thr) + L-threonine + ATP = L-threonyl-tRNA(Thr) + AMP + diphosphate + H(+). Its function is as follows. Catalyzes the attachment of threonine to tRNA(Thr) in a two-step reaction: L-threonine is first activated by ATP to form Thr-AMP and then transferred to the acceptor end of tRNA(Thr). Also edits incorrectly charged L-seryl-tRNA(Thr). This Hyperthermus butylicus (strain DSM 5456 / JCM 9403 / PLM1-5) protein is Threonine--tRNA ligase.